The primary structure comprises 172 residues: Large ribosomal subunit protein uL10 (172 aa).

This sequence belongs to the universal ribosomal protein uL10 family. Part of the ribosomal stalk of the 50S ribosomal subunit. The N-terminus interacts with L11 and the large rRNA to form the base of the stalk. The C-terminus forms an elongated spine to which L12 dimers bind in a sequential fashion forming a multimeric L10(L12)X complex.

Functionally, forms part of the ribosomal stalk, playing a central role in the interaction of the ribosome with GTP-bound translation factors. The polypeptide is Large ribosomal subunit protein uL10 (Chlorobium chlorochromatii (strain CaD3)).